The sequence spans 118 residues: DNA-binding protein MmarC6_0793 (118 aa).

Over residues 1–12 (MNPEEIRQRRLQ) the composition is skewed to basic and acidic residues. The interval 1–33 (MNPEEIRQRRLQEMQAKAQEQGAQDPEAQRQMQ) is disordered. A compositionally biased stretch (low complexity) spans 24-33 (QDPEAQRQMQ).

The protein belongs to the PDCD5 family.

The sequence is that of DNA-binding protein MmarC6_0793 from Methanococcus maripaludis (strain C6 / ATCC BAA-1332).